The sequence spans 141 residues: Large ribosomal subunit protein uL11 (141 aa).

The protein belongs to the universal ribosomal protein uL11 family. In terms of assembly, part of the ribosomal stalk of the 50S ribosomal subunit. Interacts with L10 and the large rRNA to form the base of the stalk. L10 forms an elongated spine to which L12 dimers bind in a sequential fashion forming a multimeric L10(L12)X complex. In terms of processing, one or more lysine residues are methylated.

Forms part of the ribosomal stalk which helps the ribosome interact with GTP-bound translation factors. The chain is Large ribosomal subunit protein uL11 from Streptococcus gordonii (strain Challis / ATCC 35105 / BCRC 15272 / CH1 / DL1 / V288).